Reading from the N-terminus, the 122-residue chain is Large ribosomal subunit protein uL14 (122 aa).

The protein belongs to the universal ribosomal protein uL14 family. In terms of assembly, part of the 50S ribosomal subunit. Forms a cluster with proteins L3 and L19. In the 70S ribosome, L14 and L19 interact and together make contacts with the 16S rRNA in bridges B5 and B8.

Binds to 23S rRNA. Forms part of two intersubunit bridges in the 70S ribosome. The polypeptide is Large ribosomal subunit protein uL14 (Nocardioides sp. (strain ATCC BAA-499 / JS614)).